A 385-amino-acid polypeptide reads, in one-letter code: Beta sliding clamp (385 aa).

The protein belongs to the beta sliding clamp family. In terms of assembly, forms a ring-shaped head-to-tail homodimer around DNA which binds and tethers DNA polymerases and other proteins to the DNA. The DNA replisome complex has a single clamp-loading complex (3 tau and 1 each of delta, delta', psi and chi subunits) which binds 3 Pol III cores (1 core on the leading strand and 2 on the lagging strand) each with a beta sliding clamp dimer. Additional proteins in the replisome are other copies of gamma, psi and chi, Ssb, DNA helicase and RNA primase.

The protein localises to the cytoplasm. Its function is as follows. Confers DNA tethering and processivity to DNA polymerases and other proteins. Acts as a clamp, forming a ring around DNA (a reaction catalyzed by the clamp-loading complex) which diffuses in an ATP-independent manner freely and bidirectionally along dsDNA. Initially characterized for its ability to contact the catalytic subunit of DNA polymerase III (Pol III), a complex, multichain enzyme responsible for most of the replicative synthesis in bacteria; Pol III exhibits 3'-5' exonuclease proofreading activity. The beta chain is required for initiation of replication as well as for processivity of DNA replication. This is Beta sliding clamp (dnaN) from Borreliella burgdorferi (strain ATCC 35210 / DSM 4680 / CIP 102532 / B31) (Borrelia burgdorferi).